The primary structure comprises 429 residues: Enolase (429 aa).

(2R)-2-phosphoglycerate is bound at residue Gln-169. The Proton donor role is filled by Glu-211. Residues Asp-248, Glu-289, and Asp-316 each coordinate Mg(2+). Residues Lys-341, Arg-370, Ser-371, and Lys-392 each contribute to the (2R)-2-phosphoglycerate site. Lys-341 (proton acceptor) is an active-site residue.

Belongs to the enolase family. It depends on Mg(2+) as a cofactor.

It localises to the cytoplasm. The protein localises to the secreted. The protein resides in the cell surface. It catalyses the reaction (2R)-2-phosphoglycerate = phosphoenolpyruvate + H2O. Its pathway is carbohydrate degradation; glycolysis; pyruvate from D-glyceraldehyde 3-phosphate: step 4/5. Catalyzes the reversible conversion of 2-phosphoglycerate (2-PG) into phosphoenolpyruvate (PEP). It is essential for the degradation of carbohydrates via glycolysis. This Anaplasma phagocytophilum (strain HZ) protein is Enolase.